A 55-amino-acid chain; its full sequence is Large ribosomal subunit protein bL32 (55 aa).

Basic residues predominate over residues 1–23; that stretch reads MAVPKKKTSKAKRDQRRAHWKRK. The interval 1–26 is disordered; sequence MAVPKKKTSKAKRDQRRAHWKRKATI.

The protein belongs to the bacterial ribosomal protein bL32 family.

This chain is Large ribosomal subunit protein bL32, found in Picosynechococcus sp. (strain ATCC 27264 / PCC 7002 / PR-6) (Agmenellum quadruplicatum).